The following is a 641-amino-acid chain: Forkhead box protein P4 (641 aa).

Disordered stretches follow at residues methionine 1 to leucine 43 and serine 239 to serine 264. 2 stretches are compositionally biased toward polar residues: residues isoleucine 8–serine 27 and serine 239–asparagine 259. The C2H2-type zinc-finger motif lies at glycine 278 to histidine 303. The interval valine 320–leucine 341 is leucine-zipper. The interval proline 354 to valine 358 is ctbp1-binding. Positions arginine 436 to leucine 526 form a DNA-binding region, fork-head. Residues serine 563–proline 641 are disordered. Over residues threonine 576–isoleucine 599 the composition is skewed to polar residues. Residues histidine 600–arginine 611 show a composition bias toward basic and acidic residues. Over residues arginine 629–proline 641 the composition is skewed to acidic residues.

As to quaternary structure, dimerization is required for DNA-binding. In terms of tissue distribution, first expressed in the anterior neural field of stage 15 embryos. At stage 18, localized in three domains of the brain (rostral forebrain, midbrain and hindbrain) and in the eye anlage. Cerebral and retinal expression persists at later stages with additional expression in the branchial arches, at the base of the hatching gland, and in the pancreas.

The protein resides in the nucleus. Functionally, transcriptional repressor. This chain is Forkhead box protein P4, found in Xenopus laevis (African clawed frog).